Reading from the N-terminus, the 389-residue chain is 23S rRNA (uracil(747)-C(5))-methyltransferase RlmC (389 aa).

Residues Cys5, Cys13, Cys16, and Cys94 each contribute to the [4Fe-4S] cluster site. Residues Gln219, Phe248, Glu275, and Asn321 each contribute to the S-adenosyl-L-methionine site. Cys348 (nucleophile) is an active-site residue.

Belongs to the class I-like SAM-binding methyltransferase superfamily. RNA M5U methyltransferase family. RlmC subfamily.

The catalysed reaction is uridine(747) in 23S rRNA + S-adenosyl-L-methionine = 5-methyluridine(747) in 23S rRNA + S-adenosyl-L-homocysteine + H(+). Catalyzes the formation of 5-methyl-uridine at position 747 (m5U747) in 23S rRNA. The polypeptide is 23S rRNA (uracil(747)-C(5))-methyltransferase RlmC (Mannheimia succiniciproducens (strain KCTC 0769BP / MBEL55E)).